We begin with the raw amino-acid sequence, 342 residues long: CD2 antigen cytoplasmic tail-binding protein 2 (342 aa).

The interval 1 to 64 (MPKRKVTFQG…DEEGSSKYDI (64 aa)) is disordered. Residue Lys-26 forms a Glycyl lysine isopeptide (Lys-Gly) (interchain with G-Cter in SUMO2) linkage. At Lys-44 the chain carries N6-acetyllysine. Ser-46, Ser-49, and Ser-117 each carry phosphoserine. 2 disordered regions span residues 130 to 150 (RPPD…GQTP) and 177 to 200 (LGAR…PQRL). Ser-196 carries the phosphoserine modification. Residues 281 to 339 (DVMWEYKWENTGDAELYGPFTSAQMQTWVSEGYFPDGVYCRKLDPPGGQFYNSKRIDFE) form the GYF domain.

Component of the U5 snRNP complex composed of the U5 snRNA and at least PRPF6, PRPF8, SNRNP200, EFTUD2, SNRNP40, DDX23, TXNL4A and CD2BP2. Interacts directly with TXNL4A and PRPF6. Interacts (via GYF domain) with CD2 (via Pro-rich sequence in the cytoplasmic domain). Interacts with PQBP1.

It is found in the cytoplasm. It localises to the nucleus. Its function is as follows. Involved in pre-mRNA splicing as component of the U5 snRNP complex that is involved in spliceosome assembly. The chain is CD2 antigen cytoplasmic tail-binding protein 2 (Cd2bp2) from Mus musculus (Mouse).